The chain runs to 130 residues: Large ribosomal subunit protein bL17 (130 aa).

The protein belongs to the bacterial ribosomal protein bL17 family. As to quaternary structure, part of the 50S ribosomal subunit. Contacts protein L32.

The sequence is that of Large ribosomal subunit protein bL17 from Shewanella halifaxensis (strain HAW-EB4).